The chain runs to 393 residues: Probable acetyl-CoA acetyltransferase (393 aa).

Catalysis depends on Cys-88, which acts as the Acyl-thioester intermediate. Residues His-349 and Cys-379 each act as proton acceptor in the active site.

Belongs to the thiolase-like superfamily. Thiolase family.

It catalyses the reaction 2 acetyl-CoA = acetoacetyl-CoA + CoA. The chain is Probable acetyl-CoA acetyltransferase (fadA4) from Mycobacterium leprae (strain TN).